Here is a 99-residue protein sequence, read N- to C-terminus: NADH-ubiquinone oxidoreductase chain 2 (99 aa).

The next 2 membrane-spanning stretches (helical) occupy residues 22–42 (FLTF…IQII) and 65–85 (VMIS…SIFI).

Belongs to the complex I subunit 2 family.

It localises to the mitochondrion inner membrane. The enzyme catalyses a ubiquinone + NADH + 5 H(+)(in) = a ubiquinol + NAD(+) + 4 H(+)(out). In terms of biological role, core subunit of the mitochondrial membrane respiratory chain NADH dehydrogenase (Complex I) that is believed to belong to the minimal assembly required for catalysis. Complex I functions in the transfer of electrons from NADH to the respiratory chain. The immediate electron acceptor for the enzyme is believed to be ubiquinone. The polypeptide is NADH-ubiquinone oxidoreductase chain 2 (ND2) (Cyanidium caldarium (Red alga)).